Reading from the N-terminus, the 181-residue chain is Inner membrane-spanning protein YciB (181 aa).

The next 5 helical transmembrane spans lie at 10-30, 50-70, 80-100, 118-138, and 148-168; these read LVIF…GALI, MHLI…VFHD, IIYS…KSIL, VTWY…YVAF, and FKVF…VFYL.

Belongs to the YciB family.

Its subcellular location is the cell inner membrane. In terms of biological role, plays a role in cell envelope biogenesis, maintenance of cell envelope integrity and membrane homeostasis. This is Inner membrane-spanning protein YciB from Shewanella baltica (strain OS223).